Consider the following 805-residue polypeptide: Polyribonucleotide nucleotidyltransferase (805 aa).

Mg(2+)-binding residues include Asp491 and Asp497. A KH domain is found at 558–617; the sequence is PRMESMIIDKNKIKNVIGTGGKNVREICEKTGVKIEISQDGTVMIYAVSRDAVEEAKNMI. An S1 motif domain is found at 627–694; that stretch reads GKVFSGVISE…DKDHVQLSMR (68 aa). The tract at residues 702–805 is disordered; that stretch reads DLLEHESYSS…GGGNKKPRFF (104 aa). The segment covering 709-721 has biased composition (polar residues); that stretch reads YSSSKKNGPQSGD.

The protein belongs to the polyribonucleotide nucleotidyltransferase family. Mg(2+) serves as cofactor.

It is found in the cytoplasm. It catalyses the reaction RNA(n+1) + phosphate = RNA(n) + a ribonucleoside 5'-diphosphate. In terms of biological role, involved in mRNA degradation. Catalyzes the phosphorolysis of single-stranded polyribonucleotides processively in the 3'- to 5'-direction. This is Polyribonucleotide nucleotidyltransferase from Anaplasma marginale (strain St. Maries).